Here is a 611-residue protein sequence, read N- to C-terminus: Calmegin (611 aa).

Positions 1-19 (MRFQGVGLCLGLLFITVNA) are cleaved as a signal peptide. At 20–471 (DFMDDGVEVE…LVIAAEERPW (452 aa)) the chain is on the lumenal side. The residue at position 128 (Lys128) is an N6-acetyllysine. A disulfide bridge links Cys151 with Cys185. The tract at residues 254–335 (LDDVVPPINP…KAEKPEDWSD (82 aa)) is disordered. Basic and acidic residues predominate over residues 265 to 284 (REIDDPSDKKPEEWDDRAKI). 8 consecutive repeat copies span residues 267-280 (IDDP…EWDD), 284-297 (IPDP…DWDE), 303-316 (IEDS…GWLD), 322-335 (IPNP…DWSD), 339-352 (GEWE…PACQ), 356-369 (GEWK…PKYK), 370-383 (GIWR…PNYQ), and 384-397 (GLWS…PDYF). The interaction with PPIB stretch occupies residues 317–350 (DEPKFIPNPKAEKPEDWSDDMDGEWEAPHIPNPA). Cysteines 351 and 355 form a disulfide. The helical transmembrane segment at 472-492 (LWLMYLVMAGLPVALVASFCW) threads the bilayer. Topologically, residues 493–611 (PRKVKKKYED…SLRKRRVRKD (119 aa)) are cytoplasmic. The disordered stretch occupies residues 517–611 (AALEQEAEEE…SLRKRRVRKD (95 aa)). Positions 526–584 (EKAPEKPEDVQEEKKPGEAEVVTVEKEVIGEPEEKSKEDRETLEGQEEVSKLSKSGSED) are enriched in basic and acidic residues. Phosphoserine occurs at positions 561, 578, 580, 582, 592, 595, and 602. Basic residues predominate over residues 602–611 (SLRKRRVRKD).

This sequence belongs to the calreticulin family. As to quaternary structure, interacts with PDILT and PPIB. Interacts with ADAM2. Interacts with ADAM1A, ADAM1B and ADAM3; these are protein-coding genes in mouse but may be pseudogenes in other organisms. In terms of tissue distribution, detected in testis (at protein level). Detected in testis.

It localises to the endoplasmic reticulum membrane. Functions during spermatogenesis as a chaperone for a range of client proteins that are important for sperm adhesion onto the egg zona pellucida and for subsequent penetration of the zona pellucida. Required for normal sperm migration from the uterus into the oviduct. Required for normal male fertility. Binds calcium ions. This is Calmegin (Clgn) from Mus musculus (Mouse).